The following is a 128-amino-acid chain: Holo-[acyl-carrier-protein] synthase (128 aa).

Mg(2+) is bound by residues Asp8 and Glu58.

This sequence belongs to the P-Pant transferase superfamily. AcpS family. Requires Mg(2+) as cofactor.

It is found in the cytoplasm. The enzyme catalyses apo-[ACP] + CoA = holo-[ACP] + adenosine 3',5'-bisphosphate + H(+). Its function is as follows. Transfers the 4'-phosphopantetheine moiety from coenzyme A to a Ser of acyl-carrier-protein. This Exiguobacterium sibiricum (strain DSM 17290 / CCUG 55495 / CIP 109462 / JCM 13490 / 255-15) protein is Holo-[acyl-carrier-protein] synthase.